We begin with the raw amino-acid sequence, 476 residues long: Bifunctional protein HldE (476 aa).

The interval 1 to 319 is ribokinase; sequence MKVSLPAFEK…EALALHHGES (319 aa). Position 195 to 198 (195 to 198) interacts with ATP; that stretch reads NMSE. Asp264 is an active-site residue. The segment at 345–476 is cytidylyltransferase; sequence MTNGCFDILH…AIIQNIMANQ (132 aa).

It in the N-terminal section; belongs to the carbohydrate kinase PfkB family. This sequence in the C-terminal section; belongs to the cytidylyltransferase family. Homodimer.

It catalyses the reaction D-glycero-beta-D-manno-heptose 7-phosphate + ATP = D-glycero-beta-D-manno-heptose 1,7-bisphosphate + ADP + H(+). It carries out the reaction D-glycero-beta-D-manno-heptose 1-phosphate + ATP + H(+) = ADP-D-glycero-beta-D-manno-heptose + diphosphate. Its pathway is nucleotide-sugar biosynthesis; ADP-L-glycero-beta-D-manno-heptose biosynthesis; ADP-L-glycero-beta-D-manno-heptose from D-glycero-beta-D-manno-heptose 7-phosphate: step 1/4. It functions in the pathway nucleotide-sugar biosynthesis; ADP-L-glycero-beta-D-manno-heptose biosynthesis; ADP-L-glycero-beta-D-manno-heptose from D-glycero-beta-D-manno-heptose 7-phosphate: step 3/4. Its function is as follows. Catalyzes the phosphorylation of D-glycero-D-manno-heptose 7-phosphate at the C-1 position to selectively form D-glycero-beta-D-manno-heptose-1,7-bisphosphate. Functionally, catalyzes the ADP transfer from ATP to D-glycero-beta-D-manno-heptose 1-phosphate, yielding ADP-D-glycero-beta-D-manno-heptose. This chain is Bifunctional protein HldE, found in Shewanella baltica (strain OS185).